Consider the following 266-residue polypeptide: Manganese catalase (266 aa).

Glutamate 35 is a binding site for Mn(2+). 2 residues coordinate Ca(2+): aspartate 57 and aspartate 61. Glutamate 66, histidine 69, glutamate 148, and histidine 181 together coordinate Mn(2+). 3 residues coordinate Ca(2+): asparagine 218, serine 220, and glycine 222. The disordered stretch occupies residues 243–266 (ENPEAMGGIPHIKPGDPRLHNHQG). A compositionally biased stretch (basic and acidic residues) spans 255–266 (KPGDPRLHNHQG).

It belongs to the manganese catalase family. In terms of assembly, homohexamer. Ca(2+) is required as a cofactor. Mn(2+) serves as cofactor.

The catalysed reaction is 2 H2O2 = O2 + 2 H2O. Catalyzes the decomposition of hydrogen peroxide into water and oxygen. The protein is Manganese catalase of Lactiplantibacillus plantarum (Lactobacillus plantarum).